The following is a 295-amino-acid chain: Elongation factor Ts (295 aa).

Residues T79–V82 form an involved in Mg(2+) ion dislocation from EF-Tu region.

Belongs to the EF-Ts family.

It is found in the cytoplasm. In terms of biological role, associates with the EF-Tu.GDP complex and induces the exchange of GDP to GTP. It remains bound to the aminoacyl-tRNA.EF-Tu.GTP complex up to the GTP hydrolysis stage on the ribosome. In Mycoplasma mycoides subsp. mycoides SC (strain CCUG 32753 / NCTC 10114 / PG1), this protein is Elongation factor Ts.